Consider the following 540-residue polypeptide: Chaperonin GroEL (540 aa).

Residues 30–33 (TLGP), Lys-51, 87–91 (DGTTT), Gly-415, and Asp-496 contribute to the ATP site.

This sequence belongs to the chaperonin (HSP60) family. As to quaternary structure, forms a cylinder of 14 subunits composed of two heptameric rings stacked back-to-back. Interacts with the co-chaperonin GroES.

It is found in the cytoplasm. The enzyme catalyses ATP + H2O + a folded polypeptide = ADP + phosphate + an unfolded polypeptide.. Together with its co-chaperonin GroES, plays an essential role in assisting protein folding. The GroEL-GroES system forms a nano-cage that allows encapsulation of the non-native substrate proteins and provides a physical environment optimized to promote and accelerate protein folding. This chain is Chaperonin GroEL, found in Thermodesulfovibrio yellowstonii (strain ATCC 51303 / DSM 11347 / YP87).